The chain runs to 532 residues: Putative 57 kDa heat shock protein (532 aa).

2 consecutive sHSP domains span residues 25 to 134 and 439 to 532; these read VNGP…CKIT and SVLE…IPSN.

It belongs to the small heat shock protein (HSP20) family.

The polypeptide is Putative 57 kDa heat shock protein (Arabidopsis thaliana (Mouse-ear cress)).